The following is a 565-amino-acid chain: Deoxyribodipyrimidine photo-lyase, mitochondrial (565 aa).

The 152-residue stretch at 75–226 (STVMHWFRND…QLKYYHDSCI (152 aa)) folds into the Photolyase/cryptochrome alpha/beta domain. Residues Tyr326 and 338–342 (TSGLS) each bind FAD. 2 interaction with DNA regions span residues 384–391 (EVAWRDFY) and 451–452 (NR). 482 to 484 (DGD) contributes to the FAD binding site. Gln514 contributes to the DNA binding site.

This sequence belongs to the DNA photolyase class-1 family. Monomer. It depends on FAD as a cofactor. (6R)-5,10-methylene-5,6,7,8-tetrahydrofolate serves as cofactor.

It is found in the nucleus. It localises to the mitochondrion. It carries out the reaction cyclobutadipyrimidine (in DNA) = 2 pyrimidine residues (in DNA).. Its function is as follows. Involved in repair of UV radiation-induced DNA damage. Catalyzes the light-dependent monomerization (300-600 nm) of cyclobutyl pyrimidine dimers (in cis-syn configuration), which are formed between adjacent bases on the same DNA strand upon exposure to ultraviolet radiation. The sequence is that of Deoxyribodipyrimidine photo-lyase, mitochondrial (PHR1) from Saccharomyces cerevisiae (strain ATCC 204508 / S288c) (Baker's yeast).